Reading from the N-terminus, the 478-residue chain is UDP-N-acetylmuramate--L-alanine ligase (478 aa).

120 to 126 (GSHGKTT) contributes to the ATP binding site.

This sequence belongs to the MurCDEF family.

The protein localises to the cytoplasm. It carries out the reaction UDP-N-acetyl-alpha-D-muramate + L-alanine + ATP = UDP-N-acetyl-alpha-D-muramoyl-L-alanine + ADP + phosphate + H(+). It participates in cell wall biogenesis; peptidoglycan biosynthesis. Functionally, cell wall formation. The protein is UDP-N-acetylmuramate--L-alanine ligase of Rickettsia bellii (strain OSU 85-389).